A 399-amino-acid chain; its full sequence is MIIKPRVRGFICVTAHPAGCEANVKKQIDYVTAEGPIANGPKRVLVIGASTGYGLAARITAAFGCGADTLGVFFERPGEEGKPGTSGWYNSAAFHKFAEQKGLYAKSINGDAFSDEIKRLTIEAIKQDLGQVDQVIYSLASPRRTHPKTGEVFNSTLKPIGHEVKFRGLDTDKEVIKEAVLQPATQEEIDNTVAVMGGEDWQMWIDALLEAGVLAEGAQTTAFTYLGEKITHDIYWNGSIGAAKKDLDQKVLAIRDSLSAHGGGDARVSVLKAVVTQASSAIPMMPLYLSLLFKVMKEKGTHEGCIEQVYSLYKDSLCGSAPHMDQDGRLRADYKELDPEVQNQVQQLWDQVTNDNIYQLTDFTGYKTEFLNLFGFAIDGVDYEADVNPAVKIPNLIQG.

NAD(+) is bound by residues Gly48–Tyr53, Phe74–Glu75, Asp111–Ala112, and Leu139–Ala140. Tyr225 provides a ligand contact to substrate. The active-site Proton donor is the Tyr235. NAD(+) contacts are provided by residues Lys244 and Val274–Thr276.

It belongs to the TER reductase family. Monomer.

It carries out the reaction a 2,3-saturated acyl-[ACP] + NAD(+) = a (2E)-enoyl-[ACP] + NADH + H(+). The protein operates within lipid metabolism; fatty acid biosynthesis. Involved in the final reduction of the elongation cycle of fatty acid synthesis (FAS II). Catalyzes the reduction of a carbon-carbon double bond in an enoyl moiety that is covalently linked to an acyl carrier protein (ACP). This is Enoyl-[acyl-carrier-protein] reductase [NADH] from Yersinia enterocolitica serotype O:8 / biotype 1B (strain NCTC 13174 / 8081).